The following is a 316-amino-acid chain: Delta(1)-pyrroline-2-carboxylate reductase (316 aa).

The protein belongs to the ornithine cyclodeaminase/mu-crystallin family.

The catalysed reaction is L-proline + NAD(+) = 1-pyrroline-2-carboxylate + NADH + H(+). It carries out the reaction L-proline + NADP(+) = 1-pyrroline-2-carboxylate + NADPH + H(+). Catalyzes the reduction of Delta(1)-pyrroline-2-carboxylate (Pyr2C) to L-proline, using preferentially NADPH over NADH as the electron donor. Is likely involved in a degradation pathway that converts trans-3-hydroxy-L-proline (t3LHyp) to L-proline, which would allow P.denitrificans to grow on t3LHyp as a sole carbon source. The chain is Delta(1)-pyrroline-2-carboxylate reductase from Paracoccus denitrificans (strain Pd 1222).